Here is a 577-residue protein sequence, read N- to C-terminus: Glucose-6-phosphate 1-dehydrogenase, chloroplastic (577 aa).

The disordered stretch occupies residues 1-20; the sequence is MGVQLRLNPCSSSSAATSPS. Residues 1 to 63 constitute a chloroplast transit peptide; it reads MGVQLRLNPC…QPRKHFEVFS (63 aa). The segment covering 11–20 has biased composition (low complexity); it reads SSSSAATSPS. Residues 97 to 104 and arginine 131 contribute to the NADP(+) site; that span reads GASGDLAK. A disulfide bridge links cysteine 149 with cysteine 157. An NADP(+)-binding site is contributed by lysine 234. D-glucose 6-phosphate contacts are provided by residues lysine 234, 264–268, glutamate 302, and aspartate 321; that span reads HYLGK. Histidine 326 acts as the Proton acceptor in catalysis. Position 419 (lysine 419) interacts with NADP(+). D-glucose 6-phosphate contacts are provided by lysine 422 and lysine 427. NADP(+) contacts are provided by arginine 428, arginine 432, and arginine 461. Residue glutamine 463 participates in D-glucose 6-phosphate binding. Residues 469–471 and arginine 554 each bind NADP(+); that span reads YLK.

This sequence belongs to the glucose-6-phosphate dehydrogenase family. Homodimer. In terms of tissue distribution, green tissues, leaves and chloroplasts.

The protein localises to the plastid. It localises to the chloroplast. It catalyses the reaction D-glucose 6-phosphate + NADP(+) = 6-phospho-D-glucono-1,5-lactone + NADPH + H(+). It participates in carbohydrate degradation; pentose phosphate pathway; D-ribulose 5-phosphate from D-glucose 6-phosphate (oxidative stage): step 1/3. Its activity is regulated as follows. Regulated by metabolites. Post-translationally inactivated by cysteine-mediated redox modification via the ferredoxin-thioredoxin system in the light and this avoids futile cycles with photosynthetic CO2 fixation. Functionally, catalyzes the rate-limiting step of the oxidative pentose-phosphate pathway, which represents a route for the dissimilation of carbohydrates besides glycolysis. The main function of this enzyme is to provide reducing power (NADPH) and pentose phosphates for fatty acid and nucleic acid synthesis which are involved in membrane synthesis and cell division. The sequence is that of Glucose-6-phosphate 1-dehydrogenase, chloroplastic from Solanum tuberosum (Potato).